Consider the following 545-residue polypeptide: Tripartite motif-containing protein 26 (545 aa).

The RING-type zinc finger occupies 16-57 (CSICLDYLRDPVTIDCGHVFCRSCTSDIRPISGNRPVCPLCK). The B box-type zinc-finger motif lies at 97-138 (QDMKLCERHQEKLHYYCEDDGKLLCVMCRESREHRPHTAVLV). 4 residues coordinate Zn(2+): Cys102, His105, Cys124, and His130. Residues 197-243 (QFLKKREQHLLDQLATLEQLLTEGREKFKTRGVSELDRLTLVISELE) are a coiled coil. One can recognise a B30.2/SPRY domain in the interval 301-545 (RGLRQFQGKL…WPGARLLLRP (245 aa)). The tract at residues 382 to 443 (REGWSEDEEE…EEEEEVQESC (62 aa)) is disordered. Residues 386–440 (SEDEEEGEEEEEGEEEEEDEEVGYGDGYEDWETDEEDESLGEEEEEEEEEEEEVQ) are compositionally biased toward acidic residues.

The protein belongs to the TRIM/RBCC family. In terms of assembly, interacts with TBK1; this interaction bridges together TBK1 and NEMO in order to activate TBK1. Interacts with INCA1. Post-translationally, autoubiquitinates upon viral infection. In turn, autoubiquitinated TRIM26 recruits NEMO and bridges TBK1-NEMO interaction.

It localises to the cytoplasm. Its subcellular location is the nucleus. The enzyme catalyses S-ubiquitinyl-[E2 ubiquitin-conjugating enzyme]-L-cysteine + [acceptor protein]-L-lysine = [E2 ubiquitin-conjugating enzyme]-L-cysteine + N(6)-ubiquitinyl-[acceptor protein]-L-lysine.. Its function is as follows. E3 ubiquitin-protein ligase which regulates the IFN-beta production and antiviral response downstream of various DNA-encoded pattern-recognition receptors (PRRs). Also plays a central role in determining the response to different forms of oxidative stress by controlling levels of DNA glycosylases NEIL1, NEIL3 and NTH1 that are involved in repair of damaged DNA. Promotes nuclear IRF3 ubiquitination and proteasomal degradation. Bridges together TBK1 and NEMO during the innate response to viral infection leading to the activation of TBK1. Positively regulates LPS-mediated inflammatory innate immune response by catalyzing the 'Lys-11'-linked polyubiquitination of TAB1 to enhance its activation and subsequent NF-kappa-B and MAPK signaling. In a manner independent of its catalytic activity, inhibits WWP2, a SOX2-directed E3 ubiquitin ligase, and thus protects SOX2 from polyubiquitination and proteasomal degradation. Ubiquitinates the histone acetyltransferase protein complex component PHF20 and thereby triggers its degradation in the nucleus after its recruitment by the histone demethylase KDM6B, serving as a scaffold protein. Upon induction by TGF-beta, ubiquitinates the TFIID component TAF7 for proteasomal degradation. Induces ferroptosis by ubiquitinating SLC7A11, a critical protein for lipid reactive oxygen species (ROS) scavenging. This is Tripartite motif-containing protein 26 (Trim26) from Mus musculus (Mouse).